A 492-amino-acid chain; its full sequence is Beta-Ala-His dipeptidase (492 aa).

His107 provides a ligand contact to Zn(2+). Residue Asp109 is part of the active site. Asp140 is a Zn(2+) binding site. The active-site Proton acceptor is Glu174. Residue Glu175 participates in Zn(2+) binding. Ser194 bears the Phosphoserine mark. Residues Asp203 and His453 each contribute to the Zn(2+) site.

Belongs to the peptidase M20A family. As to quaternary structure, homodimer. Zn(2+) is required as a cofactor. As to expression, detected exclusively in kidney.

The protein localises to the secreted. The catalysed reaction is Preferential hydrolysis of the beta-Ala-|-His dipeptide (carnosine), and also anserine, Xaa-|-His dipeptides and other dipeptides including homocarnosine.. The enzyme catalyses carnosine + H2O = beta-alanine + L-histidine. It carries out the reaction anserine + H2O = N(pros)-methyl-L-histidine + beta-alanine. It catalyses the reaction L-alanyl-L-histidine + H2O = L-histidine + L-alanine. The catalysed reaction is glycyl-L-histidine + H2O = L-histidine + glycine. The enzyme catalyses L-homocarnosine + H2O = 4-aminobutanoate + L-histidine. Catalyzes the peptide bond hydrolysis in Xaa-His dipeptides, displaying the highest activity toward carnosine (beta-alanyl-L-histidine) and anserine (beta-alanyl-3-methyl-histidine). This chain is Beta-Ala-His dipeptidase (Cndp1), found in Mus musculus (Mouse).